The chain runs to 633 residues: Chaperone protein dnaK2 (633 aa).

At threonine 196 the chain carries Phosphothreonine; by autocatalysis. A disordered region spans residues 600-633 (ATADGGPAQHAATGGPTSGGGGGDDVIDAEFDKG). Over residues 624 to 633 (DVIDAEFDKG) the composition is skewed to acidic residues.

The protein belongs to the heat shock protein 70 family.

Its function is as follows. Acts as a chaperone. This Streptomyces avermitilis (strain ATCC 31267 / DSM 46492 / JCM 5070 / NBRC 14893 / NCIMB 12804 / NRRL 8165 / MA-4680) protein is Chaperone protein dnaK2 (dnaK2).